A 228-amino-acid polypeptide reads, in one-letter code: 2,3-bisphosphoglycerate-dependent phosphoglycerate mutase (228 aa).

Substrate-binding positions include 8–15 (RHGQSEWN), 21–22 (TG), Arg-60, 87–90 (ERHY), Lys-98, 114–115 (RR), and 183–184 (GN). The active-site Tele-phosphohistidine intermediate is His-9. The Proton donor/acceptor role is filled by Glu-87.

Belongs to the phosphoglycerate mutase family. BPG-dependent PGAM subfamily.

The enzyme catalyses (2R)-2-phosphoglycerate = (2R)-3-phosphoglycerate. It participates in carbohydrate degradation; glycolysis; pyruvate from D-glyceraldehyde 3-phosphate: step 3/5. In terms of biological role, catalyzes the interconversion of 2-phosphoglycerate and 3-phosphoglycerate. In Staphylococcus epidermidis (strain ATCC 35984 / DSM 28319 / BCRC 17069 / CCUG 31568 / BM 3577 / RP62A), this protein is 2,3-bisphosphoglycerate-dependent phosphoglycerate mutase.